A 350-amino-acid chain; its full sequence is Sulfate/thiosulfate import ATP-binding protein cysA (350 aa).

Residues 3–237 (IEVRNLSKRF…PATPFVYGFL (235 aa)) form the ABC transporter domain. Residue 35–42 (GPSGCGKT) coordinates ATP.

It belongs to the ABC transporter superfamily. Sulfate/tungstate importer (TC 3.A.1.6) family.

Its subcellular location is the mitochondrion. It carries out the reaction sulfate(out) + ATP + H2O = sulfate(in) + ADP + phosphate + H(+). It catalyses the reaction thiosulfate(out) + ATP + H2O = thiosulfate(in) + ADP + phosphate + H(+). Part of the ABC transporter complex involved in sulfate/thiosulfate import. Responsible for energy coupling to the transport system. The chain is Sulfate/thiosulfate import ATP-binding protein cysA (CYSA) from Cucumis sativus (Cucumber).